The primary structure comprises 355 residues: Tetraacyldisaccharide 4'-kinase (355 aa).

54-61 (TVGGAGKT) serves as a coordination point for ATP.

The protein belongs to the LpxK family.

It catalyses the reaction a lipid A disaccharide + ATP = a lipid IVA + ADP + H(+). Its pathway is glycolipid biosynthesis; lipid IV(A) biosynthesis; lipid IV(A) from (3R)-3-hydroxytetradecanoyl-[acyl-carrier-protein] and UDP-N-acetyl-alpha-D-glucosamine: step 6/6. Its function is as follows. Transfers the gamma-phosphate of ATP to the 4'-position of a tetraacyldisaccharide 1-phosphate intermediate (termed DS-1-P) to form tetraacyldisaccharide 1,4'-bis-phosphate (lipid IVA). The protein is Tetraacyldisaccharide 4'-kinase of Rhizobium rhizogenes (strain K84 / ATCC BAA-868) (Agrobacterium radiobacter).